The primary structure comprises 285 residues: Heme oxygenase 3, chloroplastic (285 aa).

The N-terminal 58 residues, 1–58 (MATTRLNPSCHFPASTRLSCESYLGLRTTGRISYARTLTAPRGYLAVKANGGQASVVT), are a transit peptide targeting the chloroplast. H89 contributes to the heme b binding site. The segment covering 89–105 (HTKDQAREGEKESRSPE) has biased composition (basic and acidic residues). The tract at residues 89–109 (HTKDQAREGEKESRSPEEGPV) is disordered.

This sequence belongs to the heme oxygenase family. In terms of tissue distribution, widely expressed at low levels.

It is found in the plastid. It localises to the chloroplast. It carries out the reaction heme b + 3 reduced [NADPH--hemoprotein reductase] + 3 O2 = biliverdin IXalpha + CO + Fe(2+) + 3 oxidized [NADPH--hemoprotein reductase] + 3 H2O + H(+). Catalyzes the opening of the heme ring to form the open-chain tetrapyrrole biliverdin IX with the release of iron and carbon monoxide (CO). Produces specifically the biliverdin IX-alpha isomer. Plays a minor role in phytochrome assembly and photomorphogenesis. The protein is Heme oxygenase 3, chloroplastic (HO3) of Arabidopsis thaliana (Mouse-ear cress).